A 404-amino-acid polypeptide reads, in one-letter code: Magnesium transporter NIPA4 (404 aa).

The Extracellular segment spans residues 1–55 (MELRVSNTSCENGSLLHLYCSSQEVLCQIVNDLSPEVPSNATFHSWQERIRQNYG). Residues N7, N12, and N40 are each glycosylated (N-linked (GlcNAc...) asparagine). A helical transmembrane segment spans residues 56 to 76 (FYIGLGLAFLSSFLIGSSVIL). Topologically, residues 77-102 (KKKGLLRLVATGATRAVDGGFGYLKD) are cytoplasmic. Residues 103–123 (AMWWAGFLTMAAGEVANFGAY) form a helical membrane-spanning segment. A124 is a topological domain (extracellular). A helical membrane pass occupies residues 125–145 (FAPATVVTPLGALSVLISAIL). Residues 146 to 153 (SSYFLRES) are Cytoplasmic-facing. Residues 154–174 (LNLLGKLGCVICVAGSTVMVI) traverse the membrane as a helical segment. Residues 175-195 (HAPEEEKVTTIMEMASKMKDT) lie on the Extracellular side of the membrane. The chain crosses the membrane as a helical span at residues 196-216 (GFIVFAVLLLVSCLILIFVIA). The Cytoplasmic portion of the chain corresponds to 217-223 (PRYGQRN). Residues 224–244 (ILIYIIICSVIGAFSVAAVKG) form a helical membrane-spanning segment. Residues 245–261 (LGITIKNFFQGLPVVRH) are Extracellular-facing. Residues 262-282 (PLPYILSLILALSLSTQVNFL) traverse the membrane as a helical segment. Topologically, residues 283–293 (NRALDIFNTSL) are cytoplasmic. Residues 294–314 (VFPIYYVFFTTVVVTSSIILF) form a helical membrane-spanning segment. The Extracellular segment spans residues 315 to 324 (KEWYSMSAVD). The chain crosses the membrane as a helical span at residues 325 to 345 (IAGTLSGFVTIILGVFMLHAF). Over 346 to 404 (KDLDISCASLPHMHKNPPPSPAPEPTVIRLEDKNVLVDNIELASTSSPEEKPKVFIIHS) the chain is Cytoplasmic.

This sequence belongs to the NIPA family. Highly expressed in brain, lung, stomach, keratinocytes and leukocytes, and in all other tissues tested except liver, thyroid and fetal brain.

Its subcellular location is the cell membrane. The catalysed reaction is Mg(2+)(in) = Mg(2+)(out). Functionally, acts as a Mg(2+) transporter. Can also transport other divalent cations such as Ba(2+), Sr(2+) and Fe(2+) but to a much less extent than Mg(2+). May be a receptor for ligands (trioxilins A3 and B3) from the hepoxilin pathway. This chain is Magnesium transporter NIPA4 (NIPAL4), found in Homo sapiens (Human).